The sequence spans 5104 residues: Malformin synthetase mlfA (5104 aa).

Residues 225–616 (ERHAVNRPHS…CGRADTQVKL (392 aa)) are adenylation 1. One can recognise a Carrier 1 domain in the interval 757 to 830 (SRLEQEIQLA…EAASLAEVQE (74 aa)). S791 carries the post-translational modification O-(pantetheine 4'-phosphoryl)serine. The condensation 1 stretch occupies residues 868–1299 (EDVFPCTTMQ…ALNTLSLLQA (432 aa)). The adenylation 2 stretch occupies residues 1327 to 1716 (DRWVTRQPEG…GRKDTQVKLR (390 aa)). Residues 1854–1931 (TPASELERTL…QLAAEFGGPA (78 aa)) enclose the Carrier 2 domain. At S1891 the chain carries O-(pantetheine 4'-phosphoryl)serine. Disordered regions lie at residues 1928–1961 (GGPAGQSASSASSTTEERFTFSTPDDSSTNDGVD) and 1998–2025 (TNKTPSVSSSSSSSSSSEKKKKAAKVDS). Low complexity-rich tracts occupy residues 1934-1958 (SASSASSTTEERFTFSTPDDSSTND) and 2003-2013 (SVSSSSSSSSS). The interval 2066–2481 (EDIYPATPLQ…TVSYSDKEAL (416 aa)) is condensation 2. The adenylation 3 stretch occupies residues 2504–2896 (VRTPHAPAVC…IGRRDGQLKL (393 aa)). Residues 3032–3108 (RPVTSQEREM…QLICHLNTIR (77 aa)) enclose the Carrier 3 domain. O-(pantetheine 4'-phosphoryl)serine is present on S3069. Condensation stretches follow at residues 3125–3590 (WVAL…TYDQ) and 3611–4029 (NIYP…EQLV). Residues 4054 to 4444 (HSSREAVCAW…VGRKDNQIKF (391 aa)) are adenylation 4. Residues 4578–4654 (MPSTAAERKM…DLSDQARSLI (77 aa)) form the Carrier 4 domain. S4615 carries the post-translational modification O-(pantetheine 4'-phosphoryl)serine. Residues 4691–5018 (DVLPTTSFQR…LQTIVQHQNN (328 aa)) are condensation 5.

Belongs to the NRP synthetase family.

Its pathway is secondary metabolite biosynthesis. Nonribosomal peptide synthetase; part of the gene cluster that mediates the biosynthesis of malformins, cyclic pentapeptides with a disulfide bond between 2 consecutive cysteins, that show potential anti-tumor as well as antimalarial and antitrypanosomal properties. The nonribosomal peptide synthetase mlfA is responsible of the formation of the cyclic pentapeptide. The malformin biosynthesis clusters in malformin-producing fungi also contain enzymes involved in the formation of the disulfide bond between the two consecutive cysteins within malformins, in addition to additional tailoring enzymes such as methyltransferases or oxidoreductases. They are also composed of up to 4 major facilitator superfamily transporters, and transcription factors probably involved in the regulation of the expression of those clusters. This Aspergillus vadensis (strain CBS 113365 / IMI 142717 / IBT 24658) protein is Malformin synthetase mlfA.